Reading from the N-terminus, the 63-residue chain is Large ribosomal subunit protein eL37 (63 aa).

Zn(2+) is bound by residues C20, C23, C35, and C38. Residues 20–38 (CRRCGRRAFNVKKGYCAAC) form a C4-type zinc finger.

The protein belongs to the eukaryotic ribosomal protein eL37 family. The cofactor is Zn(2+).

Binds to the 23S rRNA. This chain is Large ribosomal subunit protein eL37, found in Thermococcus gammatolerans (strain DSM 15229 / JCM 11827 / EJ3).